Here is a 375-residue protein sequence, read N- to C-terminus: Anhydro-N-acetylmuramic acid kinase (375 aa).

An ATP-binding site is contributed by 14-21; it reads GTSMDGAD.

Belongs to the anhydro-N-acetylmuramic acid kinase family.

It carries out the reaction 1,6-anhydro-N-acetyl-beta-muramate + ATP + H2O = N-acetyl-D-muramate 6-phosphate + ADP + H(+). It functions in the pathway amino-sugar metabolism; 1,6-anhydro-N-acetylmuramate degradation. It participates in cell wall biogenesis; peptidoglycan recycling. In terms of biological role, catalyzes the specific phosphorylation of 1,6-anhydro-N-acetylmuramic acid (anhMurNAc) with the simultaneous cleavage of the 1,6-anhydro ring, generating MurNAc-6-P. Is required for the utilization of anhMurNAc either imported from the medium or derived from its own cell wall murein, and thus plays a role in cell wall recycling. This chain is Anhydro-N-acetylmuramic acid kinase, found in Cupriavidus pinatubonensis (strain JMP 134 / LMG 1197) (Cupriavidus necator (strain JMP 134)).